A 311-amino-acid polypeptide reads, in one-letter code: Aspartate carbamoyltransferase catalytic subunit (311 aa).

Carbamoyl phosphate contacts are provided by Arg55 and Thr56. L-aspartate is bound at residue Lys83. Residues Arg105, His134, and Gln137 each coordinate carbamoyl phosphate. Residues Arg167 and Arg226 each coordinate L-aspartate. Residues Gly267 and Pro268 each coordinate carbamoyl phosphate.

This sequence belongs to the aspartate/ornithine carbamoyltransferase superfamily. ATCase family. In terms of assembly, heterododecamer (2C3:3R2) of six catalytic PyrB chains organized as two trimers (C3), and six regulatory PyrI chains organized as three dimers (R2).

The enzyme catalyses carbamoyl phosphate + L-aspartate = N-carbamoyl-L-aspartate + phosphate + H(+). It functions in the pathway pyrimidine metabolism; UMP biosynthesis via de novo pathway; (S)-dihydroorotate from bicarbonate: step 2/3. Catalyzes the condensation of carbamoyl phosphate and aspartate to form carbamoyl aspartate and inorganic phosphate, the committed step in the de novo pyrimidine nucleotide biosynthesis pathway. The sequence is that of Aspartate carbamoyltransferase catalytic subunit from Corynebacterium jeikeium (strain K411).